Here is a 673-residue protein sequence, read N- to C-terminus: Bifunctional polymyxin resistance protein ArnA (673 aa).

The interval 1 to 311 (MKAIVFAYHD…EMGMVPQARL (311 aa)) is formyltransferase ArnAFT. Histidine 104 functions as the Proton donor; for formyltransferase activity in the catalytic mechanism. (6R)-10-formyltetrahydrofolate is bound by residues arginine 114 and 136–140 (VSRAD). A dehydrogenase ArnADH region spans residues 321–673 (RRTRVLILGV…HTADATDTQG (353 aa)). NAD(+) is bound by residues aspartate 354 and 375-376 (DI). UDP-alpha-D-glucuronate contacts are provided by residues alanine 400, tyrosine 405, and 439–440 (TS). The Proton acceptor; for decarboxylase activity role is filled by glutamate 441. Residues arginine 467, asparagine 499, 533–542 (KLVDGGAQKR), and tyrosine 620 contribute to the UDP-alpha-D-glucuronate site. Residue arginine 626 is the Proton donor; for decarboxylase activity of the active site.

In the N-terminal section; belongs to the Fmt family. UDP-L-Ara4N formyltransferase subfamily. It in the C-terminal section; belongs to the NAD(P)-dependent epimerase/dehydratase family. UDP-glucuronic acid decarboxylase subfamily. In terms of assembly, homohexamer, formed by a dimer of trimers.

The catalysed reaction is UDP-alpha-D-glucuronate + NAD(+) = UDP-beta-L-threo-pentopyranos-4-ulose + CO2 + NADH. It catalyses the reaction UDP-4-amino-4-deoxy-beta-L-arabinose + (6R)-10-formyltetrahydrofolate = UDP-4-deoxy-4-formamido-beta-L-arabinose + (6S)-5,6,7,8-tetrahydrofolate + H(+). It functions in the pathway nucleotide-sugar biosynthesis; UDP-4-deoxy-4-formamido-beta-L-arabinose biosynthesis; UDP-4-deoxy-4-formamido-beta-L-arabinose from UDP-alpha-D-glucuronate: step 1/3. It participates in nucleotide-sugar biosynthesis; UDP-4-deoxy-4-formamido-beta-L-arabinose biosynthesis; UDP-4-deoxy-4-formamido-beta-L-arabinose from UDP-alpha-D-glucuronate: step 3/3. The protein operates within bacterial outer membrane biogenesis; lipopolysaccharide biosynthesis. Functionally, bifunctional enzyme that catalyzes the oxidative decarboxylation of UDP-glucuronic acid (UDP-GlcUA) to UDP-4-keto-arabinose (UDP-Ara4O) and the addition of a formyl group to UDP-4-amino-4-deoxy-L-arabinose (UDP-L-Ara4N) to form UDP-L-4-formamido-arabinose (UDP-L-Ara4FN). The modified arabinose is attached to lipid A and is required for resistance to polymyxin and cationic antimicrobial peptides. The protein is Bifunctional polymyxin resistance protein ArnA of Pectobacterium atrosepticum (strain SCRI 1043 / ATCC BAA-672) (Erwinia carotovora subsp. atroseptica).